Reading from the N-terminus, the 247-residue chain is uncharacterized protein (247 aa).

4–28 (ALVTGGSRGIGRATALLLAQEGYTV) serves as a coordination point for NADP(+). Residue serine 142 coordinates substrate. Tyrosine 156 serves as the catalytic Proton acceptor.

It belongs to the short-chain dehydrogenases/reductases (SDR) family.

This is an uncharacterized protein from Escherichia coli (strain K12).